Consider the following 653-residue polypeptide: 1-deoxy-D-xylulose-5-phosphate synthase (653 aa).

Thiamine diphosphate contacts are provided by residues H86 and 127 to 129 (GHS). D158 is a Mg(2+) binding site. Residues 159–160 (GA), N187, and F294 contribute to the thiamine diphosphate site. Residue N187 participates in Mg(2+) binding. The span at 309 to 324 (KLEKTTSEPPPKKEPR) shows a compositional bias: basic and acidic residues. The interval 309 to 343 (KLEKTTSEPPPKKEPRSPNAATAEPEAQPKPQPKP) is disordered. E395 is a thiamine diphosphate binding site.

The protein belongs to the transketolase family. DXPS subfamily. As to quaternary structure, homodimer. Mg(2+) is required as a cofactor. Requires thiamine diphosphate as cofactor.

It catalyses the reaction D-glyceraldehyde 3-phosphate + pyruvate + H(+) = 1-deoxy-D-xylulose 5-phosphate + CO2. Its pathway is metabolic intermediate biosynthesis; 1-deoxy-D-xylulose 5-phosphate biosynthesis; 1-deoxy-D-xylulose 5-phosphate from D-glyceraldehyde 3-phosphate and pyruvate: step 1/1. In terms of biological role, catalyzes the acyloin condensation reaction between C atoms 2 and 3 of pyruvate and glyceraldehyde 3-phosphate to yield 1-deoxy-D-xylulose-5-phosphate (DXP). The chain is 1-deoxy-D-xylulose-5-phosphate synthase from Chromohalobacter salexigens (strain ATCC BAA-138 / DSM 3043 / CIP 106854 / NCIMB 13768 / 1H11).